The following is a 197-amino-acid chain: Dephospho-CoA kinase (197 aa).

Positions 4–197 (LIGLTGGIAT…VLKWLKTITK (194 aa)) constitute a DPCK domain. ATP is bound at residue 12–17 (ATGKST).

It belongs to the CoaE family.

The protein localises to the cytoplasm. It catalyses the reaction 3'-dephospho-CoA + ATP = ADP + CoA + H(+). It participates in cofactor biosynthesis; coenzyme A biosynthesis; CoA from (R)-pantothenate: step 5/5. In terms of biological role, catalyzes the phosphorylation of the 3'-hydroxyl group of dephosphocoenzyme A to form coenzyme A. The sequence is that of Dephospho-CoA kinase from Lactiplantibacillus plantarum (strain ATCC BAA-793 / NCIMB 8826 / WCFS1) (Lactobacillus plantarum).